The following is a 289-amino-acid chain: ATP synthase gamma chain (289 aa).

This sequence belongs to the ATPase gamma chain family. F-type ATPases have 2 components, CF(1) - the catalytic core - and CF(0) - the membrane proton channel. CF(1) has five subunits: alpha(3), beta(3), gamma(1), delta(1), epsilon(1). CF(0) has three main subunits: a, b and c.

The protein localises to the cell inner membrane. Its function is as follows. Produces ATP from ADP in the presence of a proton gradient across the membrane. The gamma chain is believed to be important in regulating ATPase activity and the flow of protons through the CF(0) complex. This is ATP synthase gamma chain from Coxiella burnetii (strain Dugway 5J108-111).